Reading from the N-terminus, the 87-residue chain is Bradykinin-potentiating peptide NDBP12 (87 aa).

Residues Met-1–Ser-22 form the signal peptide. Residues Pro-64 to Pro-75 show a composition bias toward low complexity. The tract at residues Pro-64 to Arg-87 is disordered.

The protein belongs to the non-disulfide-bridged peptide (NDBP) superfamily. Long chain multifunctional peptide (group 2) family. Expressed by the venom gland.

The protein localises to the secreted. In terms of biological role, inhibits angiotensin-converting enzyme (ACE), but does not serve as substrate for the enzyme. Potentiates bradykinin (BK) on the isolated guinea pig ileum as well as the isolated rat uterus for contraction. Also potentiates in vivo the depressor effect of BK on arterial blood pressure in the normotensive anesthetized rat. The chain is Bradykinin-potentiating peptide NDBP12 from Lychas mucronatus (Chinese swimming scorpion).